Consider the following 517-residue polypeptide: Aldehyde dehydrogenase X, mitochondrial (517 aa).

The N-terminal 17 residues, 1–17 (MLRFLAPRLLSLQGRTA), are a transit peptide targeting the mitochondrion. Lys-51 is subject to N6-acetyllysine. Lys-52 is modified (N6-acetyllysine; alternate). Lys-52 carries the N6-succinyllysine; alternate modification. Position 81 is an N6-succinyllysine (Lys-81). 262–267 (GSTEVG) lines the NAD(+) pocket. Residue Glu-285 is the Proton acceptor of the active site. Residue Cys-319 is the Nucleophile of the active site. Lys-364, Lys-383, Lys-399, Lys-414, and Lys-426 each carry N6-acetyllysine; alternate. An N6-succinyllysine; alternate mark is found at Lys-364, Lys-383, Lys-399, Lys-414, and Lys-426. An N6-acetyllysine modification is found at Lys-429.

Belongs to the aldehyde dehydrogenase family. Homotetramer.

It localises to the mitochondrion matrix. It catalyses the reaction an aldehyde + NAD(+) + H2O = a carboxylate + NADH + 2 H(+). Its pathway is alcohol metabolism; ethanol degradation; acetate from ethanol: step 2/2. Its function is as follows. ALDHs play a major role in the detoxification of alcohol-derived acetaldehyde. They are involved in the metabolism of corticosteroids, biogenic amines, neurotransmitters, and lipid peroxidation. The polypeptide is Aldehyde dehydrogenase X, mitochondrial (ALDH1B1) (Pongo abelii (Sumatran orangutan)).